The primary structure comprises 335 residues: Ketol-acid reductoisomerase (NAD(P)(+)) (335 aa).

Residues 2–182 (AKIYKDEDIS…GCARAGVIES (181 aa)) enclose the KARI N-terminal Rossmann domain. NADP(+) contacts are provided by residues 25 to 28 (YGSQ), Arg-49, Ser-53, and 83 to 86 (DMVQ). His-108 is an active-site residue. Residue Gly-134 coordinates NADP(+). The 146-residue stretch at 183–328 (TFKEETETDL…RKLREMMFRG (146 aa)) folds into the KARI C-terminal knotted domain. Mg(2+) is bound by residues Asp-191, Glu-195, Glu-227, and Glu-231. Ser-252 provides a ligand contact to substrate.

This sequence belongs to the ketol-acid reductoisomerase family. As to quaternary structure, homodimer. The cofactor is Mg(2+).

It catalyses the reaction (2R)-2,3-dihydroxy-3-methylbutanoate + NAD(+) = (2S)-2-acetolactate + NADH + H(+). The enzyme catalyses (2R)-2,3-dihydroxy-3-methylbutanoate + NADP(+) = (2S)-2-acetolactate + NADPH + H(+). It functions in the pathway amino-acid biosynthesis; L-isoleucine biosynthesis; L-isoleucine from 2-oxobutanoate: step 2/4. It participates in amino-acid biosynthesis; L-valine biosynthesis; L-valine from pyruvate: step 2/4. Involved in the biosynthesis of branched-chain amino acids (BCAA). Catalyzes an alkyl-migration followed by a ketol-acid reduction of (S)-2-acetolactate (S2AL) to yield (R)-2,3-dihydroxy-isovalerate. In the isomerase reaction, S2AL is rearranged via a Mg-dependent methyl migration to produce 3-hydroxy-3-methyl-2-ketobutyrate (HMKB). In the reductase reaction, this 2-ketoacid undergoes a metal-dependent reduction by NADPH or NADH to yield (R)-2,3-dihydroxy-isovalerate. The polypeptide is Ketol-acid reductoisomerase (NAD(P)(+)) (Ignisphaera aggregans (strain DSM 17230 / JCM 13409 / AQ1.S1)).